The following is a 492-amino-acid chain: Protein nucleotidyltransferase YdiU (492 aa).

Glycine 94, glycine 96, arginine 97, lysine 117, aspartate 129, glycine 130, arginine 180, and arginine 187 together coordinate ATP. Aspartate 257 functions as the Proton acceptor in the catalytic mechanism. Mg(2+) is bound by residues asparagine 258 and aspartate 267. Residue aspartate 267 coordinates ATP.

The protein belongs to the SELO family. The cofactor is Mg(2+). Mn(2+) serves as cofactor.

It carries out the reaction L-seryl-[protein] + ATP = 3-O-(5'-adenylyl)-L-seryl-[protein] + diphosphate. It catalyses the reaction L-threonyl-[protein] + ATP = 3-O-(5'-adenylyl)-L-threonyl-[protein] + diphosphate. The catalysed reaction is L-tyrosyl-[protein] + ATP = O-(5'-adenylyl)-L-tyrosyl-[protein] + diphosphate. The enzyme catalyses L-histidyl-[protein] + UTP = N(tele)-(5'-uridylyl)-L-histidyl-[protein] + diphosphate. It carries out the reaction L-seryl-[protein] + UTP = O-(5'-uridylyl)-L-seryl-[protein] + diphosphate. It catalyses the reaction L-tyrosyl-[protein] + UTP = O-(5'-uridylyl)-L-tyrosyl-[protein] + diphosphate. Functionally, nucleotidyltransferase involved in the post-translational modification of proteins. It can catalyze the addition of adenosine monophosphate (AMP) or uridine monophosphate (UMP) to a protein, resulting in modifications known as AMPylation and UMPylation. In Halalkalibacterium halodurans (strain ATCC BAA-125 / DSM 18197 / FERM 7344 / JCM 9153 / C-125) (Bacillus halodurans), this protein is Protein nucleotidyltransferase YdiU.